The chain runs to 257 residues: Putative hydro-lyase Bcep18194_B2576 (257 aa).

The protein belongs to the D-glutamate cyclase family.

This chain is Putative hydro-lyase Bcep18194_B2576, found in Burkholderia lata (strain ATCC 17760 / DSM 23089 / LMG 22485 / NCIMB 9086 / R18194 / 383).